Reading from the N-terminus, the 395-residue chain is Elongation factor Tu (395 aa).

One can recognise a tr-type G domain in the interval 10-204; the sequence is KPHVNIGTIG…EVDAYIPTPE (195 aa). Residues 19–26 are G1; the sequence is GHVDHGKT. 19-26 lines the GTP pocket; that stretch reads GHVDHGKT. Position 26 (Thr-26) interacts with Mg(2+). The tract at residues 60 to 64 is G2; it reads GITIS. The segment at 81–84 is G3; that stretch reads DCPG. GTP contacts are provided by residues 81–85 and 136–139; these read DCPGH and NKCD. The interval 136 to 139 is G4; the sequence is NKCD. Residues 174–176 form a G5 region; it reads SAL.

This sequence belongs to the TRAFAC class translation factor GTPase superfamily. Classic translation factor GTPase family. EF-Tu/EF-1A subfamily. In terms of assembly, monomer.

It is found in the cytoplasm. The enzyme catalyses GTP + H2O = GDP + phosphate + H(+). Its function is as follows. GTP hydrolase that promotes the GTP-dependent binding of aminoacyl-tRNA to the A-site of ribosomes during protein biosynthesis. This chain is Elongation factor Tu, found in Bacillus anthracis (strain A0248).